Consider the following 121-residue polypeptide: Secretin (121 aa).

An N-terminal signal peptide occupies residues 1-18; that stretch reads MAPRPLLLLLLLLGGSAA. The propeptide occupies 19-26; it reads RPAPPRAR. At V54 the chain carries Valine amide. S58 bears the Phosphoserine mark. Positions 58-121 are excised as a propeptide; the sequence is SEQDAENSMA…AAAEGTLRPR (64 aa).

This sequence belongs to the glucagon family.

The protein localises to the secreted. In terms of biological role, hormone involved in different processes, such as regulation of the pH of the duodenal content, food intake and water homeostasis. Exerts its biological effects by binding to secretin receptor (SCTR), a G-protein coupled receptor expressed in the basolateral domain of several cells. Acts as a key gastrointestinal hormone by regulating the pH of the duodenal content. Secreted by S cells of the duodenum in the crypts of Lieberkuehn and regulates the pH of the duodenum by (1) inhibiting the secretion of gastric acid from the parietal cells of the stomach and (2) stimulating the production of bicarbonate (NaHCO(3)) from the ductal cells of the pancreas. Production of bicarbonate is essential to neutralize the pH and ensure no damage is done to the small intestine by the gastric acid. In addition to regulating the pH of the duodenal content, plays a central role in diet induced thermogenesis: acts as a non-sympathetic brown fat (BAT) activator mediating prandial thermogenesis, which consequentially induces satiation. Mechanistically, secretin released by the gut after a meal binds to secretin receptor (SCTR) in brown adipocytes, activating brown fat thermogenesis by stimulating lipolysis, which is sensed in the brain and promotes satiation. Also able to stimulate lipolysis in white adipocytes. Also plays an important role in cellular osmoregulation: released into the systemic circulation in response to hyperosmolality and acts at different levels in the hypothalamus, pituitary and kidney to regulate water homeostasis. Also plays a role in the central nervous system, possibly by acting as a neuropeptide hormone: required for hippocampal synaptic function and neural progenitor cells maintenance. This chain is Secretin, found in Homo sapiens (Human).